The sequence spans 532 residues: Bifunctional purine biosynthesis protein PurH (532 aa).

An MGS-like domain is found at 1 to 148 (MQTPKPIKRA…KNHKDVTIVV (148 aa)).

The protein belongs to the PurH family.

The enzyme catalyses (6R)-10-formyltetrahydrofolate + 5-amino-1-(5-phospho-beta-D-ribosyl)imidazole-4-carboxamide = 5-formamido-1-(5-phospho-D-ribosyl)imidazole-4-carboxamide + (6S)-5,6,7,8-tetrahydrofolate. The catalysed reaction is IMP + H2O = 5-formamido-1-(5-phospho-D-ribosyl)imidazole-4-carboxamide. It functions in the pathway purine metabolism; IMP biosynthesis via de novo pathway; 5-formamido-1-(5-phospho-D-ribosyl)imidazole-4-carboxamide from 5-amino-1-(5-phospho-D-ribosyl)imidazole-4-carboxamide (10-formyl THF route): step 1/1. It participates in purine metabolism; IMP biosynthesis via de novo pathway; IMP from 5-formamido-1-(5-phospho-D-ribosyl)imidazole-4-carboxamide: step 1/1. The polypeptide is Bifunctional purine biosynthesis protein PurH (Alteromonas mediterranea (strain DSM 17117 / CIP 110805 / LMG 28347 / Deep ecotype)).